A 209-amino-acid chain; its full sequence is Ribosomal RNA large subunit methyltransferase E (209 aa).

Positions 63, 65, 83, 99, and 124 each coordinate S-adenosyl-L-methionine. Lysine 164 (proton acceptor) is an active-site residue.

It belongs to the class I-like SAM-binding methyltransferase superfamily. RNA methyltransferase RlmE family.

It localises to the cytoplasm. The enzyme catalyses uridine(2552) in 23S rRNA + S-adenosyl-L-methionine = 2'-O-methyluridine(2552) in 23S rRNA + S-adenosyl-L-homocysteine + H(+). Its function is as follows. Specifically methylates the uridine in position 2552 of 23S rRNA at the 2'-O position of the ribose in the fully assembled 50S ribosomal subunit. The sequence is that of Ribosomal RNA large subunit methyltransferase E from Klebsiella pneumoniae (strain 342).